The primary structure comprises 29 residues: Cycloviolacin-O16 (29 aa).

The cyclopeptide (Gly-Asn) cross-link spans 1–29 (GLPCGETCFTGKCYTPGCSCSYPICKKIN). 3 cysteine pairs are disulfide-bonded: C4–C18, C8–C20, and C13–C25.

Post-translationally, this is a cyclic peptide.

Functionally, probably participates in a plant defense mechanism. This is Cycloviolacin-O16 from Viola odorata (Sweet violet).